Reading from the N-terminus, the 98-residue chain is Small ribosomal subunit protein bS6c (98 aa).

Belongs to the bacterial ribosomal protein bS6 family.

It localises to the plastid. The protein resides in the chloroplast. Functionally, binds together with bS18 to 16S ribosomal RNA. The chain is Small ribosomal subunit protein bS6c from Phaeodactylum tricornutum (strain CCAP 1055/1).